The following is a 294-amino-acid chain: Beta-lactamase (294 aa).

Positions 1 to 27 are cleaved as a signal peptide; it reads MFKKRGRQTVLIAAVLAFFTASSPLLA. Ser-76 serves as the catalytic Acyl-ester intermediate. Glu-174 (proton acceptor) is an active-site residue. Residue 240–242 participates in substrate binding; the sequence is KTG.

Belongs to the class-A beta-lactamase family.

It catalyses the reaction a beta-lactam + H2O = a substituted beta-amino acid. In Citrobacter koseri (Citrobacter diversus), this protein is Beta-lactamase.